A 346-amino-acid chain; its full sequence is tRNA N6-adenosine threonylcarbamoyltransferase (346 aa).

2 residues coordinate Fe cation: histidine 110 and histidine 114. Residues 132–136, aspartate 165, glycine 178, and asparagine 274 each bind substrate; that span reads LLSGG. Fe cation is bound at residue aspartate 298.

Belongs to the KAE1 / TsaD family. It depends on Fe(2+) as a cofactor.

Its subcellular location is the cytoplasm. It catalyses the reaction L-threonylcarbamoyladenylate + adenosine(37) in tRNA = N(6)-L-threonylcarbamoyladenosine(37) in tRNA + AMP + H(+). Required for the formation of a threonylcarbamoyl group on adenosine at position 37 (t(6)A37) in tRNAs that read codons beginning with adenine. Is involved in the transfer of the threonylcarbamoyl moiety of threonylcarbamoyl-AMP (TC-AMP) to the N6 group of A37, together with TsaE and TsaB. TsaD likely plays a direct catalytic role in this reaction. In Borreliella burgdorferi (strain ATCC 35210 / DSM 4680 / CIP 102532 / B31) (Borrelia burgdorferi), this protein is tRNA N6-adenosine threonylcarbamoyltransferase.